The sequence spans 29 residues: Augerpeptide hheTx2 (29 aa).

In terms of processing, contains 4 disulfide bonds. As to expression, expressed by the venom duct.

It localises to the secreted. The polypeptide is Augerpeptide hheTx2 (Hastula hectica (Sea snail)).